Here is a 795-residue protein sequence, read N- to C-terminus: Phenylalanine--tRNA ligase beta subunit (795 aa).

A tRNA-binding domain is found at 39–148 (AGSFNGVVVG…ADAPLGTDIR (110 aa)). The region spanning 401 to 476 (PKRATITLRR…RVYGYNNIPD (76 aa)) is the B5 domain. The Mg(2+) site is built by aspartate 454, aspartate 460, glutamate 463, and glutamate 464. The region spanning 701-794 (SRFPANRRDI…LKERFQASLR (94 aa)) is the FDX-ACB domain.

It belongs to the phenylalanyl-tRNA synthetase beta subunit family. Type 1 subfamily. In terms of assembly, tetramer of two alpha and two beta subunits. It depends on Mg(2+) as a cofactor.

The protein resides in the cytoplasm. It carries out the reaction tRNA(Phe) + L-phenylalanine + ATP = L-phenylalanyl-tRNA(Phe) + AMP + diphosphate + H(+). The sequence is that of Phenylalanine--tRNA ligase beta subunit from Salmonella paratyphi A (strain ATCC 9150 / SARB42).